The primary structure comprises 136 residues: Large-conductance mechanosensitive channel (136 aa).

2 helical membrane passes run 9–29 (AFAS…GAAF) and 79–99 (IQTI…LKAI).

This sequence belongs to the MscL family. As to quaternary structure, homopentamer.

It is found in the cell inner membrane. Functionally, channel that opens in response to stretch forces in the membrane lipid bilayer. May participate in the regulation of osmotic pressure changes within the cell. The polypeptide is Large-conductance mechanosensitive channel (Shewanella sp. (strain ANA-3)).